The sequence spans 145 residues: Large ribosomal subunit protein uL15 (145 aa).

The span at 1 to 13 (MNLHELKYNEGAR) shows a compositional bias: basic and acidic residues. The segment at 1–56 (MNLHELKYNEGARKEKHRVGRGHAAGKGKQAGKGQSGQLKRTGSKPGFEGGQNPWY) is disordered. Positions 14–26 (KEKHRVGRGHAAG) are enriched in basic residues.

Belongs to the universal ribosomal protein uL15 family. In terms of assembly, part of the 50S ribosomal subunit.

Its function is as follows. Binds to the 23S rRNA. The sequence is that of Large ribosomal subunit protein uL15 from Mycoplasma mobile (strain ATCC 43663 / 163K / NCTC 11711) (Mesomycoplasma mobile).